The following is a 453-amino-acid chain: MSRHTDLVRSFLEQLEARDYREGAILAREFSDIKARSVAWKSEGVCSTKAGSRLGNTNKNRYKDVVAYDETRVILSLLQEEGHGDYINANFIRGIDGSQAYIATQGPLPHTLLDFWRLVWEFGVKVILMACQETENGRRKCERYWAREQEPLKAGPFCITLTKETTLNADITLRTLQVTFQKEFRSVHQLQYMSWPDHGVPSSSDHILTMVEEARCLQGLGPGPLCVHCSAGCGRTGVLCAVDYVRQLLLTQTIPPNFSLFQVVLEMRKQRPAAVQTEEQYRFLYHTVAQLFSRTLQDTSPHYQNLKENCAPICKEAFSLRTSSALPATSRPPGGVLRSISVPAPPTLPMADTYAVVQKRGASAGTGPGPRAPTSTDTPIYSQVAPRAQRPVAHTEDAQGTTALRRVPADQNSSGPDAYEEVTDGAQTGGLGFNLRIGRPKGPRDPPAEWTRV.

In terms of domain architecture, Tyrosine-protein phosphatase spans 26–291 (LAREFSDIKA…RFLYHTVAQL (266 aa)). Substrate-binding positions include D197, 229–235 (CSAGCGR), and Q276. Residue C229 is the Phosphocysteine intermediate of the active site. Y381 and Y419 each carry phosphotyrosine. The segment at 384-453 (VAPRAQRPVA…RDPPAEWTRV (70 aa)) is disordered. A compositionally biased stretch (basic and acidic residues) spans 442–453 (GPRDPPAEWTRV).

Belongs to the protein-tyrosine phosphatase family. Non-receptor class 4 subfamily. As to quaternary structure, interacts with PSTPIP1. In terms of tissue distribution, highest expression in bone marrow. Also expressed in kidney, lung, ovary, spleen, thymus and lymph node.

The protein resides in the nucleus. It is found in the cytoplasm. The catalysed reaction is O-phospho-L-tyrosyl-[protein] + H2O = L-tyrosyl-[protein] + phosphate. Functionally, may be involved in growth and differentiation of hematopoietic cells. The protein is Tyrosine-protein phosphatase non-receptor type 18 (Ptpn18) of Mus musculus (Mouse).